Reading from the N-terminus, the 1092-residue chain is DNA polymerase delta catalytic subunit (1092 aa).

The disordered stretch occupies residues 1–71; sequence MDGKRKFNGT…SRPPPPELDP (71 aa). Positions 4 to 19 match the Nuclear localization signal motif; the sequence is KRKFNGTSNGHAKKPR. Zn(2+) contacts are provided by C997, C1000, C1014, and C1017. The segment at 997-1017 adopts a CysA-type zinc-finger fold; sequence CLGCKSLMPKGYEQACLCPHC. Residues C1046, C1049, C1059, and C1064 each coordinate [4Fe-4S] cluster. A CysB motif motif is present at residues 1046 to 1064; sequence CQRCQESLHEEVICSNRDC.

This sequence belongs to the DNA polymerase type-B family. As to quaternary structure, catalytic component of the DNA polymerase delta complex consisting of three subunits: the catalytic subunit PolD1 and two accessory subunits PolD2/Pol31 and PolD3/Pol32. Within the delta complex, interacts with both PolD2 and PolD3, and is able to interact with PolD2 in the absence of PolD3. Interacts with PCNA and PCNA2. [4Fe-4S] cluster is required as a cofactor. It depends on Mg(2+) as a cofactor. Expressed in ovaries (at the protein level). Expressed in embryos (at the protein level).

It localises to the nucleus. It is found in the nucleoplasm. It carries out the reaction DNA(n) + a 2'-deoxyribonucleoside 5'-triphosphate = DNA(n+1) + diphosphate. Its activity is regulated as follows. Inhibited by KCL. Also inhibited by carbonyldiphosphonate, aphidicolin and N-ethylmaleimide (NEM). In terms of biological role, as the catalytic component of the DNA polymerase delta complex, plays a crucial role in high fidelity genome replication, including lagging strand synthesis, DNA recombination and repair. Exhibits both DNA polymerase and 3'- to 5'-exonuclease activities. Required at the nucleus of rapidly dividing embryonic cells to activate genome replication during the earliest cell cycles. Likely to require the presence of accessory proteins PolD2 and PolD3 for full activity. The chain is DNA polymerase delta catalytic subunit from Drosophila melanogaster (Fruit fly).